The following is a 419-amino-acid chain: Putative Bro-N domain-containing protein 201R (419 aa).

In terms of domain architecture, Bro-N spans 4 to 136; the sequence is LINLKDCKEY…KILPSIRKYG (133 aa). Residues 150–195 are a coiled coil; sequence QLALKDKSEEELQIKLQEERIEKENAYMKLRSEAKRHKEQIKRTLE.

It belongs to the IIV-6 201R/289L family.

In Acheta domesticus (House cricket), this protein is Putative Bro-N domain-containing protein 201R.